Consider the following 38-residue polypeptide: Photosystem I reaction center subunit IX (38 aa).

The chain crosses the membrane as a helical span at residues 4–24; the sequence is FLTTAPVVAAIWFTLTAGILI.

It belongs to the PsaJ family.

It is found in the cellular thylakoid membrane. Functionally, may help in the organization of the PsaE and PsaF subunits. The chain is Photosystem I reaction center subunit IX from Parasynechococcus marenigrum (strain WH8102).